Here is a 504-residue protein sequence, read N- to C-terminus: Maturase K (504 aa).

Belongs to the intron maturase 2 family. MatK subfamily.

The protein resides in the plastid. The protein localises to the chloroplast. In terms of biological role, usually encoded in the trnK tRNA gene intron. Probably assists in splicing its own and other chloroplast group II introns. In Nepenthes gracilis (Slender pitcher plant), this protein is Maturase K.